Consider the following 185-residue polypeptide: Elongation factor P (185 aa).

This sequence belongs to the elongation factor P family.

Its subcellular location is the cytoplasm. It functions in the pathway protein biosynthesis; polypeptide chain elongation. Functionally, involved in peptide bond synthesis. Stimulates efficient translation and peptide-bond synthesis on native or reconstituted 70S ribosomes in vitro. Probably functions indirectly by altering the affinity of the ribosome for aminoacyl-tRNA, thus increasing their reactivity as acceptors for peptidyl transferase. The polypeptide is Elongation factor P (Bacillus licheniformis (strain ATCC 14580 / DSM 13 / JCM 2505 / CCUG 7422 / NBRC 12200 / NCIMB 9375 / NCTC 10341 / NRRL NRS-1264 / Gibson 46)).